A 452-amino-acid polypeptide reads, in one-letter code: MEFQAVVMAVGGGSRMTDLTSSIPKPLLPVGNKPLIWYPLNLLERVGFEEVIVITTKDVQKALCADFNKMKMKLDIVCIPDEADMGTADSLRHIYQKLKTDVLVLSCDLITDVALHEVVDLFRAHDASLAMLMRKGQESLEPVPGQKGKKKAVEQRDFVGVDSTGKRLLFMANEADLDEELIIKGSILQKHPRIRFHTGLVDAHLYCLKKYVVDFLMENKSITSIRSELIPYLVRKQFSSASSQQGQEEKEEDLKKKELKSLDIYSFIKEANTLTLAPYDTCWNACRGDSWEGLSRSQVRCYVHIMKEGLCSRVSTLGLYMEANRQVSKLLPVICPEESLIHSSAQIVSKHMVGADSLIGPDTQVGEKSSIKHSVIGSSCVIRDRVTVTNCLLMNSVTVEEGSNIQSSIICNDAVIEKGADIKNCLIGSGQRIEAKAKRVNVIVGNDQFLEI.

An N-acetylmethionine modification is found at methionine 1. Phosphoserine is present on serine 261.

This sequence belongs to the eIF-2B gamma/epsilon subunits family. In terms of assembly, component of the translation initiation factor 2B (eIF2B) complex which is a heterodecamer of two sets of five different subunits: alpha, beta, gamma, delta and epsilon. Subunits alpha, beta and delta comprise a regulatory subcomplex and subunits epsilon and gamma comprise a catalytic subcomplex. Within the complex, the hexameric regulatory complex resides at the center, with the two heterodimeric catalytic subcomplexes bound on opposite sides.

The protein resides in the cytoplasm. It is found in the cytosol. With respect to regulation, activated by the chemical integrated stress response (ISR) inhibitor ISRIB which stimulates guanine nucleotide exchange factor activity for both phosphorylated and unphosphorylated eIF2. In terms of biological role, acts as a component of the translation initiation factor 2B (eIF2B) complex, which catalyzes the exchange of GDP for GTP on the eukaryotic initiation factor 2 (eIF2) complex gamma subunit. Its guanine nucleotide exchange factor activity is repressed when bound to eIF2 complex phosphorylated on the alpha subunit, thereby limiting the amount of methionyl-initiator methionine tRNA available to the ribosome and consequently global translation is repressed. In Bos taurus (Bovine), this protein is Translation initiation factor eIF2B subunit gamma (EIF2B3).